Reading from the N-terminus, the 513-residue chain is Calcium-dependent protein kinase 24 (513 aa).

The segment at 1–33 is disordered; sequence MQPDPSGSGGDGNANAKAKLAPPPVTAAGGRPV. Residues 47-305 enclose the Protein kinase domain; sequence YRIGKKLGQG…AHEVLCHPWI (259 aa). Residues 53–61 and lysine 76 each bind ATP; that span reads LGQGQFGTT. Aspartate 171 acts as the Proton acceptor in catalysis. The interval 311–341 is autoinhibitory domain; that stretch reads APDKPIDSAVLSRLKHFSAMNKLKKMALRVI. EF-hand domains follow at residues 348-383, 384-419, 420-455, and 458-489; these read EEIG…VGSE, LTEH…MNKL, EREE…FGLD, and HLED…GNAG. Positions 361, 363, 365, 367, 372, 397, 399, 401, 403, 408, 433, 435, 437, 444, 467, 469, 471, 473, and 478 each coordinate Ca(2+).

Belongs to the protein kinase superfamily. Ser/Thr protein kinase family. CDPK subfamily. Expressed in roots.

It localises to the cytoplasm. The enzyme catalyses L-seryl-[protein] + ATP = O-phospho-L-seryl-[protein] + ADP + H(+). It carries out the reaction L-threonyl-[protein] + ATP = O-phospho-L-threonyl-[protein] + ADP + H(+). Its activity is regulated as follows. Activated by calcium. Autophosphorylation may play an important role in the regulation of the kinase activity. In terms of biological role, may play a role in signal transduction pathways that involve calcium as a second messenger. Possesses calcium-dependent protein kinase activity in vitro. This chain is Calcium-dependent protein kinase 24, found in Oryza sativa subsp. japonica (Rice).